Here is a 360-residue protein sequence, read N- to C-terminus: Peptide chain release factor 1 (360 aa).

Gln237 is modified (N5-methylglutamine).

The protein belongs to the prokaryotic/mitochondrial release factor family. Post-translationally, methylated by PrmC. Methylation increases the termination efficiency of RF1.

The protein resides in the cytoplasm. In terms of biological role, peptide chain release factor 1 directs the termination of translation in response to the peptide chain termination codons UAG and UAA. This chain is Peptide chain release factor 1, found in Pseudomonas fluorescens (strain ATCC BAA-477 / NRRL B-23932 / Pf-5).